Consider the following 453-residue polypeptide: Carbamoyl phosphate synthase arginine-specific small chain (453 aa).

A mitochondrion-targeting transit peptide spans 1–13; it reads MFSKLAANFAQRA. Residues 233–420 enclose the Glutamine amidotransferase type-1 domain; it reads HVALIDCGVK…LENVRAAKSA (188 aa). Cysteine 309 functions as the Nucleophile in the catalytic mechanism. Catalysis depends on residues histidine 393 and glutamate 395.

Belongs to the CarA family. In terms of assembly, heterodimer composed of 2 chains; the small (or glutamine) chain promotes the hydrolysis of glutamine to ammonia, which is used by the large (or ammonia) chain to synthesize carbamoyl phosphate.

It localises to the mitochondrion matrix. The catalysed reaction is hydrogencarbonate + L-glutamine + 2 ATP + H2O = carbamoyl phosphate + L-glutamate + 2 ADP + phosphate + 2 H(+). The enzyme catalyses L-glutamine + H2O = L-glutamate + NH4(+). It participates in amino-acid biosynthesis; L-arginine biosynthesis; carbamoyl phosphate from bicarbonate: step 1/1. Small subunit of the arginine-specific carbamoyl phosphate synthase (CPSase). CPSase catalyzes the formation of carbamoyl phosphate from the ammonia moiety of glutamine, carbonate, and phosphate donated by ATP, the first step of the arginine biosynthetic pathway. The small subunit (glutamine amidotransferase) binds and cleaves glutamine to supply the large subunit with the substrate ammonia. The sequence is that of Carbamoyl phosphate synthase arginine-specific small chain (cpa1) from Hypocrea virens (Gliocladium virens).